A 415-amino-acid chain; its full sequence is Ubp4-interactor sfp47 (415 aa).

2 positions are modified to phosphoserine: S221 and S226. T231 is subject to Phosphothreonine. Residue S235 is modified to Phosphoserine. One can recognise an SH3 domain in the interval 352–415 (PIFAYVRALY…PSNYIEELEY (64 aa)).

As to quaternary structure, interacts with ubp4.

Its subcellular location is the cytoplasm. It is found in the endosome. Functionally, required for the regulation of activity and recruitment of ubp4 to endosomes. The sequence is that of Ubp4-interactor sfp47 (sfp47) from Schizosaccharomyces pombe (strain 972 / ATCC 24843) (Fission yeast).